Reading from the N-terminus, the 110-residue chain is Tyrosine-protein phosphatase 3 (110 aa).

One can recognise a Tyrosine-protein phosphatase domain in the interval 1–110 (QKCATIVMVT…NPPHSGPIVV (110 aa)). Aspartate 80 is a substrate binding site.

The protein belongs to the protein-tyrosine phosphatase family.

It carries out the reaction O-phospho-L-tyrosyl-[protein] + H2O = L-tyrosyl-[protein] + phosphate. The protein is Tyrosine-protein phosphatase 3 (STY-3) of Styela plicata (Wrinkled sea squirt).